Reading from the N-terminus, the 425-residue chain is MLDQKLIRENPTFVENNLSLRGKFYDIHSIHKITVERKEIDIKISSLQSESKKLSKIIGQEIRNPNNANSQELNKLKEQGNKYRIKVSEFEEKKRILDQQIRDEILKLPNFPSKDAPFGENESNNIQIKEWGDPLKKDNLKTHWEIGENLKLFDSIKSTKIAKSRFITLSGNGARLERALINFMLDVHSNNGYLELMPPALVNSESLQGSGQLPKFSNESFKCANDDLWLSPTAEVPLTAFHKNEIIDPKLLPLKYVAYSPCFRREAGSYGRDTKGLIRLHQFNKVELYWFSDPNKSLEAHKEITADAESILKKLNLPYRLVDICTGDLGFSSSRTFDLEVWLPSNKCYREISSCSNCRDFQARRSSIRTKIDKKTSYIHTLNGSGLAIGRTMAAILENGQRPDGSVKIPDVLVPYFGSSLIKTN.

Residue 233–235 participates in L-serine binding; the sequence is TAE. 264-266 provides a ligand contact to ATP; that stretch reads RRE. Glu287 contributes to the L-serine binding site. 351–354 contributes to the ATP binding site; that stretch reads EISS. Residue Ser385 participates in L-serine binding.

Belongs to the class-II aminoacyl-tRNA synthetase family. Type-1 seryl-tRNA synthetase subfamily. In terms of assembly, homodimer. The tRNA molecule binds across the dimer.

The protein localises to the cytoplasm. It catalyses the reaction tRNA(Ser) + L-serine + ATP = L-seryl-tRNA(Ser) + AMP + diphosphate + H(+). The enzyme catalyses tRNA(Sec) + L-serine + ATP = L-seryl-tRNA(Sec) + AMP + diphosphate + H(+). The protein operates within aminoacyl-tRNA biosynthesis; selenocysteinyl-tRNA(Sec) biosynthesis; L-seryl-tRNA(Sec) from L-serine and tRNA(Sec): step 1/1. Functionally, catalyzes the attachment of serine to tRNA(Ser). Is also able to aminoacylate tRNA(Sec) with serine, to form the misacylated tRNA L-seryl-tRNA(Sec), which will be further converted into selenocysteinyl-tRNA(Sec). The polypeptide is Serine--tRNA ligase (Prochlorococcus marinus (strain MIT 9515)).